Consider the following 193-residue polypeptide: MVSKIMNKKYEKGLSLIESAMVLALAATVTAGVMFYYQSASDSNKSQNAISEVMSATSAINGLYIGQTSYSGLDSTILLNTSAIPDNYKDTTNKKITNPFGGELNVGPANNNTAFGYYLTLTRLDKAACVSLATLNLGTSAKGYGVNISGENNITSFGNSADQAAKSTAITPAEAATACKNTDSTNKVTYFMK.

A propeptide spans 1–13 (MVSKIMNKKYEKG) (leader sequence). The residue at position 14 (leucine 14) is an N-methylleucine. The helical transmembrane segment at 14–35 (LSLIESAMVLALAATVTAGVMF) threads the bilayer. A disulfide bridge links cysteine 129 with cysteine 179.

It belongs to the N-Me-Phe pilin family. In terms of assembly, 10 to 100 laterally aligned filaments or bundle-forming pili coalesce into rope-like bundles. These form linkages between the bacteria within the enteropathogenic E.coli (EPEC) microcolonies that are attached to epithelial cells.

The protein resides in the fimbrium. Its subcellular location is the membrane. Its function is as follows. Major component of type IV bundle-forming pili (BFP) that plays a role in adherence to host cells and virulence. In Escherichia coli O127:H6 (strain E2348/69 / EPEC), this protein is Major structural subunit of bundle-forming pilus (bfpA).